We begin with the raw amino-acid sequence, 796 residues long: Protein translocase subunit SecA 2 (796 aa).

Residues Gln-84, 102–106 (GEGKT), and Asp-496 each bind ATP.

It belongs to the SecA family. Monomer and homodimer. Part of the essential Sec protein translocation apparatus which comprises SecA, SecYEG and auxiliary proteins SecDF. Other proteins may also be involved.

Its subcellular location is the cell membrane. It localises to the cytoplasm. The catalysed reaction is ATP + H2O + cellular proteinSide 1 = ADP + phosphate + cellular proteinSide 2.. Functionally, part of the Sec protein translocase complex. Interacts with the SecYEG preprotein conducting channel. Has a central role in coupling the hydrolysis of ATP to the transfer of proteins into and across the cell membrane, serving as an ATP-driven molecular motor driving the stepwise translocation of polypeptide chains across the membrane. This is Protein translocase subunit SecA 2 from Staphylococcus haemolyticus (strain JCSC1435).